Consider the following 306-residue polypeptide: N-acetylmuramic acid 6-phosphate etherase (306 aa).

Positions 59–222 (TSQALAKGGR…STGTMVMLGK (164 aa)) constitute an SIS domain. Catalysis depends on E87, which acts as the Proton donor. E118 is a catalytic residue.

This sequence belongs to the GCKR-like family. MurNAc-6-P etherase subfamily. In terms of assembly, homodimer.

It carries out the reaction N-acetyl-D-muramate 6-phosphate + H2O = N-acetyl-D-glucosamine 6-phosphate + (R)-lactate. It participates in amino-sugar metabolism; N-acetylmuramate degradation. Specifically catalyzes the cleavage of the D-lactyl ether substituent of MurNAc 6-phosphate, producing GlcNAc 6-phosphate and D-lactate. The protein is N-acetylmuramic acid 6-phosphate etherase of Microcystis aeruginosa (strain NIES-843 / IAM M-2473).